The sequence spans 90 residues: Phaiodotoxin (90 aa).

The N-terminal stretch at 1-18 (MKTIPLLFLLFIYFECDG) is a signal peptide. Residues 19–90 (KFIRHKDESF…CFGALESKCA (72 aa)) enclose the LCN-type CS-alpha/beta domain. Disulfide bonds link Cys31–Cys56, Cys41–Cys68, Cys45–Cys70, and Cys81–Cys89.

In terms of tissue distribution, expressed by the venom gland.

It localises to the secreted. Functionally, sodium channel (Nav) specific neurotoxin. Causes impairment of movement and mild paralysis in crickets at a dose of 0.5 ug per animal. A dose of 0.8 ug per cricket causes clear flaccid paralysis. A dose of 1.0 ug per cricket causes death within 2 hours. Is not toxic to mice at a dose of 100 ug per 20 g mouse weight. The sequence is that of Phaiodotoxin from Anuroctonus phaiodactylus (Mafia scorpion).